We begin with the raw amino-acid sequence, 436 residues long: GTPase Der (436 aa).

EngA-type G domains are found at residues 4–167 (PTVA…PVEE) and 175–351 (IRFS…ESQN). Residues 10-17 (GRPNVGKS), 57-61 (DTGGI), 119-122 (NKVD), 181-188 (GRPNVGKS), 229-233 (DTAGM), and 294-297 (NKWD) contribute to the GTP site. The KH-like domain occupies 352–436 (KRIPSAVLND…PIHLIARKRK (85 aa)).

It belongs to the TRAFAC class TrmE-Era-EngA-EngB-Septin-like GTPase superfamily. EngA (Der) GTPase family. In terms of assembly, associates with the 50S ribosomal subunit.

Its function is as follows. GTPase that plays an essential role in the late steps of ribosome biogenesis. This chain is GTPase Der, found in Streptococcus pyogenes serotype M28 (strain MGAS6180).